We begin with the raw amino-acid sequence, 1323 residues long: Phosphoribosylformylglycinamidine synthase (1323 aa).

ATP is bound by residues 312–323 (GAATGSGGEIRD), 391–393 (NGY), and Ala-691. Mg(2+) is bound by residues Asp-692, Glu-733, Asn-737, and Asp-903. Ser-905 provides a ligand contact to ATP. Residues 1062–1306 (VAILREQGVN…YPHSKASEWG (245 aa)) form the Glutamine amidotransferase type-1 domain. Cys-1156 (nucleophile) is an active-site residue. Catalysis depends on residues His-1284 and Glu-1286.

It in the N-terminal section; belongs to the FGAMS family.

The protein localises to the cytoplasm. The enzyme catalyses N(2)-formyl-N(1)-(5-phospho-beta-D-ribosyl)glycinamide + L-glutamine + ATP + H2O = 2-formamido-N(1)-(5-O-phospho-beta-D-ribosyl)acetamidine + L-glutamate + ADP + phosphate + H(+). It participates in purine metabolism; IMP biosynthesis via de novo pathway; 5-amino-1-(5-phospho-D-ribosyl)imidazole from N(2)-formyl-N(1)-(5-phospho-D-ribosyl)glycinamide: step 1/2. In terms of biological role, phosphoribosylformylglycinamidine synthase involved in the purines biosynthetic pathway. Catalyzes the ATP-dependent conversion of formylglycinamide ribonucleotide (FGAR) and glutamine to yield formylglycinamidine ribonucleotide (FGAM) and glutamate. In Schizosaccharomyces pombe (strain 972 / ATCC 24843) (Fission yeast), this protein is Phosphoribosylformylglycinamidine synthase (ade3).